Consider the following 243-residue polypeptide: Adenylate dimethylallyltransferase (243 aa).

It carries out the reaction dimethylallyl diphosphate + AMP = N(6)-(dimethylallyl)adenosine 5'-phosphate + diphosphate. Its function is as follows. Transfers dimethylallyl groups to AMP as part of the biosynthesis of cytokinin phytohormones. This chain is Adenylate dimethylallyltransferase (tzs), found in Agrobacterium tumefaciens (strain T37).